A 215-amino-acid chain; its full sequence is ATP-dependent dethiobiotin synthetase BioD (215 aa).

Residue 13–18 coordinates ATP; the sequence is DIGKTI. Thr17 lines the Mg(2+) pocket. Lys38 is an active-site residue. Thr42 lines the substrate pocket. ATP contacts are provided by residues Asp50, 115–118, and 175–176; these read EGAG and NH. Mg(2+) contacts are provided by Asp50 and Glu115.

The protein belongs to the dethiobiotin synthetase family. As to quaternary structure, homodimer. The cofactor is Mg(2+).

The protein resides in the cytoplasm. It catalyses the reaction (7R,8S)-7,8-diammoniononanoate + CO2 + ATP = (4R,5S)-dethiobiotin + ADP + phosphate + 3 H(+). It participates in cofactor biosynthesis; biotin biosynthesis; biotin from 7,8-diaminononanoate: step 1/2. Its function is as follows. Catalyzes a mechanistically unusual reaction, the ATP-dependent insertion of CO2 between the N7 and N8 nitrogen atoms of 7,8-diaminopelargonic acid (DAPA, also called 7,8-diammoniononanoate) to form a ureido ring. The sequence is that of ATP-dependent dethiobiotin synthetase BioD from Neisseria meningitidis serogroup A / serotype 4A (strain DSM 15465 / Z2491).